We begin with the raw amino-acid sequence, 307 residues long: Ras-related protein Rab-33 (307 aa).

A disordered region spans residues V19 to A80. Composition is skewed to pro residues over residues P42–P56 and P65–P75. Residue G107–T114 participates in GTP binding. The short motif at T129–F137 is the Effector region element. Residues D155–Q159 and N217–D220 contribute to the GTP site. S-geranylgeranyl cysteine attachment occurs at residues C306 and C307.

Belongs to the small GTPase superfamily. Rab family.

It is found in the cell membrane. The chain is Ras-related protein Rab-33 (rab-33) from Caenorhabditis elegans.